Reading from the N-terminus, the 98-residue chain is MFEQNLTSEALTVTTVTSQDQITQKPLRDSVKASLKNYLAQLNGQEVSELYELVLAEVEQPLLDTIMQYTRGNQTRAATMMGINRGTLRKKLKKYGMN.

The segment at residues 74–93 (QTRAATMMGINRGTLRKKLK) is a DNA-binding region (H-T-H motif).

It belongs to the transcriptional regulatory Fis family. In terms of assembly, homodimer.

Functionally, activates ribosomal RNA transcription. Plays a direct role in upstream activation of rRNA promoters. This is DNA-binding protein Fis from Vibrio atlanticus (strain LGP32) (Vibrio splendidus (strain Mel32)).